Reading from the N-terminus, the 206-residue chain is uncharacterized protein (206 aa).

An N-terminal signal peptide occupies residues 1–18; that stretch reads MSSLVLIPCALLTQGIYA.

This is an uncharacterized protein from Acanthamoeba polyphaga mimivirus (APMV).